A 259-amino-acid chain; its full sequence is Proteasome subunit alpha (259 aa).

The protein belongs to the peptidase T1A family. As to quaternary structure, the 20S proteasome core is composed of 14 alpha and 14 beta subunits that assemble into four stacked heptameric rings, resulting in a barrel-shaped structure. The two inner rings, each composed of seven catalytic beta subunits, are sandwiched by two outer rings, each composed of seven alpha subunits. The catalytic chamber with the active sites is on the inside of the barrel. Has a gated structure, the ends of the cylinder being occluded by the N-termini of the alpha-subunits. Is capped at one or both ends by the proteasome regulatory ATPase, PAN.

The protein resides in the cytoplasm. With respect to regulation, the formation of the proteasomal ATPase PAN-20S proteasome complex, via the docking of the C-termini of PAN into the intersubunit pockets in the alpha-rings, triggers opening of the gate for substrate entry. Interconversion between the open-gate and close-gate conformations leads to a dynamic regulation of the 20S proteasome proteolysis activity. Its function is as follows. Component of the proteasome core, a large protease complex with broad specificity involved in protein degradation. In Methanococcus maripaludis (strain C7 / ATCC BAA-1331), this protein is Proteasome subunit alpha.